We begin with the raw amino-acid sequence, 167 residues long: Probable phospholipid hydroperoxide glutathione peroxidase (167 aa).

Residue C41 is part of the active site.

It belongs to the glutathione peroxidase family.

It is found in the cytoplasm. The enzyme catalyses a hydroperoxy polyunsaturated fatty acid + 2 glutathione = a hydroxy polyunsaturated fatty acid + glutathione disulfide + H2O. Its function is as follows. Protects cells and enzymes from oxidative damage, by catalyzing the reduction of hydrogen peroxide, lipid peroxides and organic hydroperoxide, by glutathione. This is Probable phospholipid hydroperoxide glutathione peroxidase (CSA) from Citrus sinensis (Sweet orange).